We begin with the raw amino-acid sequence, 207 residues long: Glycerol-3-phosphate acyltransferase (207 aa).

Transmembrane regions (helical) follow at residues 7–27 (YALA…LVIV), 58–78 (LATF…FTLL), 83–103 (VGFV…WLGF), 116–136 (LAFV…LGLF), 141–161 (ISSL…WLMG), and 166–186 (LILA…RENI).

Belongs to the PlsY family. Probably interacts with PlsX.

Its subcellular location is the cell inner membrane. The catalysed reaction is an acyl phosphate + sn-glycerol 3-phosphate = a 1-acyl-sn-glycero-3-phosphate + phosphate. The protein operates within lipid metabolism; phospholipid metabolism. Catalyzes the transfer of an acyl group from acyl-phosphate (acyl-PO(4)) to glycerol-3-phosphate (G3P) to form lysophosphatidic acid (LPA). This enzyme utilizes acyl-phosphate as fatty acyl donor, but not acyl-CoA or acyl-ACP. The polypeptide is Glycerol-3-phosphate acyltransferase (Hyphomonas neptunium (strain ATCC 15444)).